A 419-amino-acid polypeptide reads, in one-letter code: Murein hydrolase activator EnvC (419 aa).

The signal sequence occupies residues 1-34; that stretch reads MTRAVKPRRFAIRPIIYASVLSAGVLLCAFSAHA. Coiled-coil stretches lie at residues 35 to 124 and 155 to 271; these read DERD…LDAA and LNQA…ATRK. Residues 252–270 are compositionally biased toward basic and acidic residues; the sequence is EREAREAQAVRDRQKEATR. The disordered stretch occupies residues 252–290; sequence EREAREAQAVRDRQKEATRKGTTYKPTESEKSLMSRTGG.

This sequence belongs to the peptidase M23B family.

Its subcellular location is the periplasm. Activator of the cell wall hydrolases AmiA and AmiB. Required for septal murein cleavage and daughter cell separation during cell division. In vitro, exhibits weak endoproteolytic activity on beta-casein. The polypeptide is Murein hydrolase activator EnvC (envC) (Escherichia coli (strain K12)).